We begin with the raw amino-acid sequence, 259 residues long: Phosphatidylglycerol--prolipoprotein diacylglyceryl transferase (259 aa).

4 consecutive transmembrane segments (helical) span residues 9 to 29, 55 to 75, 92 to 112, and 117 to 137; these read IIFS…VIGI, FITY…VLLY, EGGM…YLFC, and INFL…LFLG. A 1,2-diacyl-sn-glycero-3-phospho-(1'-sn-glycerol) is bound at residue Arg-138. 3 consecutive transmembrane segments (helical) span residues 172-192, 201-221, and 228-248; these read QLYE…YTTF, GLNS…IEIF, and IGFI…MLLL.

Belongs to the Lgt family.

It localises to the cell inner membrane. The enzyme catalyses L-cysteinyl-[prolipoprotein] + a 1,2-diacyl-sn-glycero-3-phospho-(1'-sn-glycerol) = an S-1,2-diacyl-sn-glyceryl-L-cysteinyl-[prolipoprotein] + sn-glycerol 1-phosphate + H(+). It participates in protein modification; lipoprotein biosynthesis (diacylglyceryl transfer). Catalyzes the transfer of the diacylglyceryl group from phosphatidylglycerol to the sulfhydryl group of the N-terminal cysteine of a prolipoprotein, the first step in the formation of mature lipoproteins. This is Phosphatidylglycerol--prolipoprotein diacylglyceryl transferase from Rickettsia conorii (strain ATCC VR-613 / Malish 7).